We begin with the raw amino-acid sequence, 282 residues long: Probable endonuclease 4 (282 aa).

Residues His-66, His-106, Glu-143, Asp-176, His-179, His-213, Asp-226, His-228, and Glu-258 each coordinate Zn(2+).

The protein belongs to the AP endonuclease 2 family. Requires Zn(2+) as cofactor.

The catalysed reaction is Endonucleolytic cleavage to 5'-phosphooligonucleotide end-products.. Endonuclease IV plays a role in DNA repair. It cleaves phosphodiester bonds at apurinic or apyrimidinic (AP) sites, generating a 3'-hydroxyl group and a 5'-terminal sugar phosphate. The sequence is that of Probable endonuclease 4 from Aquifex aeolicus (strain VF5).